The primary structure comprises 400 residues: Argininosuccinate synthase (400 aa).

ATP-binding positions include 10–18 (AYSGGVDTS) and A38. L-citrulline is bound at residue Y89. G119 contributes to the ATP binding site. The L-aspartate site is built by T121, N125, and D126. Residue N125 coordinates L-citrulline. L-citrulline-binding residues include R129, S177, S186, E262, and Y274.

It belongs to the argininosuccinate synthase family. Type 1 subfamily. As to quaternary structure, homotetramer.

Its subcellular location is the cytoplasm. It carries out the reaction L-citrulline + L-aspartate + ATP = 2-(N(omega)-L-arginino)succinate + AMP + diphosphate + H(+). Its pathway is amino-acid biosynthesis; L-arginine biosynthesis; L-arginine from L-ornithine and carbamoyl phosphate: step 2/3. The polypeptide is Argininosuccinate synthase (Nostoc punctiforme (strain ATCC 29133 / PCC 73102)).